The chain runs to 959 residues: DNA translocase FtsK 1 (959 aa).

3 consecutive transmembrane segments (helical) span residues 1–21 (MGLG…WRYV), 39–59 (IWLA…LTSG), and 83–103 (GWTG…PMVF). At 104–959 (GHSWRQLLAR…REVIAPGGGD (856 aa)) the chain is on the cytoplasmic side. The disordered stretch occupies residues 122–427 (PVQADARHDE…AAPPPPAVPA (306 aa)). A compositionally biased stretch (basic and acidic residues) spans 126 to 136 (DARHDEADDGL). Low complexity-rich tracts occupy residues 220-229 (ATPKAATQAP) and 264-286 (APSA…DAPA). Pro residues predominate over residues 287-298 (SAPPEPAEPSPP). Over residues 333-379 (PEPEPEPEAETEVTPEAEAEPEAEPEAEAEPEAEAEAEAEAEAEPEA) the composition is skewed to acidic residues. Positions 380-403 (EAPAPESVAPALQEAEAATAAEAP) are enriched in low complexity. The FtsK domain maps to 605 to 814 (GNPVVTDLAR…FQVSSKIDSR (210 aa)). 625–630 (GSGKSV) serves as a coordination point for ATP.

This sequence belongs to the FtsK/SpoIIIE/SftA family. Homohexamer. Forms a ring that surrounds DNA.

The protein localises to the cell inner membrane. Essential cell division protein that coordinates cell division and chromosome segregation. The N-terminus is involved in assembly of the cell-division machinery. The C-terminus functions as a DNA motor that moves dsDNA in an ATP-dependent manner towards the dif recombination site, which is located within the replication terminus region. Translocation stops specifically at Xer-dif sites, where FtsK interacts with the Xer recombinase, allowing activation of chromosome unlinking by recombination. FtsK orienting polar sequences (KOPS) guide the direction of DNA translocation. FtsK can remove proteins from DNA as it translocates, but translocation stops specifically at XerCD-dif site, thereby preventing removal of XerC and XerD from dif. The protein is DNA translocase FtsK 1 (ftsK1) of Ralstonia nicotianae (strain ATCC BAA-1114 / GMI1000) (Ralstonia solanacearum).